Consider the following 336-residue polypeptide: Potassium channel subfamily K member 1 (336 aa).

The Cytoplasmic segment spans residues 1–20 (MLQSLAGSSCVRLVERHRSA). A helical membrane pass occupies residues 21–41 (WCFGLLVLGYLLYLVFGAVVF). Residues 42–103 (SSVELPYEDL…SNASGNWNWD (62 aa)) lie on the Extracellular side of the membrane. Residue asparagine 95 is glycosylated (N-linked (GlcNAc...) asparagine). An intramembrane region (helical) is located at residues 104–116 (FTSALFFASTVLS). Residues 117–122 (TTGYGH) lie within the membrane without spanning it. Residues 117 to 122 (TTGYGH) form a selectivity filter 1 region. Residues 123 to 132 (TVPLSDGGKA) are Extracellular-facing. A helical transmembrane segment spans residues 133 to 156 (FCIIYSVIGIPFTLLFLTAVVQRI). Residues 157–181 (TVHVTRRPVLYFHIRWGFSKQMVGI) are Cytoplasmic-facing. Residues 182–202 (VHAVVLGFVTVSCFFFIPAAV) traverse the membrane as a helical segment. At 203–211 (FSVLEDDWN) the chain is on the extracellular side. Residues 212–224 (FLESFYFCFISLS) constitute an intramembrane region (helical). Residues 225–230 (TIGLGD) form a selectivity filter 2 region. Residues 225-231 (TIGLGDY) lie within the membrane without spanning it. Residues 232-243 (VPGEGYNQKFRE) are Extracellular-facing. A helical transmembrane segment spans residues 244-267 (LYKIGITCYLLLGLIAMLVVLETF). Over 268-336 (CELHELKKFR…SAYAEDSASH (69 aa)) the chain is Cytoplasmic. Residue lysine 274 forms a Glycyl lysine isopeptide (Lys-Gly) (interchain with G-Cter in SUMO) linkage. The tract at residues 293-299 (IVEHDQL) is important for intracellular retention in recycling endosomes.

The protein belongs to the two pore domain potassium channel (TC 1.A.1.8) family. Homodimer; disulfide-linked. Heterodimer with KCNK2; disulfide-linked. In astrocytes, forms mostly heterodimeric potassium channels with KCNK2, with only a minor proportion of functional channels containing homodimeric KCNK1. Interacts with KCNK3 and KCNK9, forming functional heterodimeric channels. Interacts with GNG4. Identified in a complex with PSD and ARF6; interacts only with PSD that is bound to ARF6. Interacts with UBE2I. Post-translationally, sumoylation is controversial. Sumoylated by UBE2I. Not sumoylated when expressed in xenopus oocytes or mammalian cells. Sumoylation inactivates the channel, but does not interfere with expression at the cell membrane. Sumoylation of a single subunit is sufficient to silence the dimeric channel. Sumoylation of KCNK1 is sufficient to silence heterodimeric channels formed by KCNK1 and KCNK3 or KCNK9. Desumoylated by SENP1; this activates the channel. Desumoylated by SENP1; this strongly increases halothane-mediated activation of heterodimeric channels formed with KCNK9. SENP1 treatment has no effect.

The protein localises to the cell membrane. It is found in the recycling endosome. The protein resides in the synaptic cell membrane. Its subcellular location is the cytoplasmic vesicle. It localises to the perikaryon. The protein localises to the cell projection. It is found in the dendrite. The protein resides in the apical cell membrane. It catalyses the reaction K(+)(in) = K(+)(out). The enzyme catalyses NH4(+)(in) = NH4(+)(out). It carries out the reaction Na(+)(in) = Na(+)(out). The catalysed reaction is Rb(+)(in) = Rb(+)(out). It catalyses the reaction Cs(+)(in) = Cs(+)(out). The enzyme catalyses Li(+)(in) = Li(+)(out). It carries out the reaction L-glutamate(out) = L-glutamate(in). The catalysed reaction is chloride(in) = chloride(out). In terms of biological role, ion channel that contributes to passive transmembrane potassium transport and to the regulation of the resting membrane potential in brain astrocytes, but also in kidney and in other tissues. Forms dimeric channels through which potassium ions pass in accordance with their electrochemical gradient. The channel is selective for K(+) ions at physiological potassium concentrations and at neutral pH, but becomes permeable to Na(+) at subphysiological K(+) levels and upon acidification of the extracellular medium. The homodimer has very low potassium channel activity, when expressed in heterologous systems, and can function as weakly inward rectifying potassium channel. Channel activity is modulated by activation of serotonin receptors. Heterodimeric channels containing KCNK1 and KCNK2 have much higher activity, and may represent the predominant form in astrocytes. Heterodimeric channels containing KCNK1 and KCNK3 or KCNK9 have much higher activity. Heterodimeric channels formed by KCNK1 and KCNK9 may contribute to halothane-sensitive currents. Mediates outward rectifying potassium currents in dentate gyrus granule cells and contributes to the regulation of their resting membrane potential. Contributes to the regulation of action potential firing in dentate gyrus granule cells and down-regulates their intrinsic excitability. In astrocytes, the heterodimer formed by KCNK1 and KCNK2 is required for rapid glutamate release in response to activation of G-protein coupled receptors, such as F2R and CNR1. Required for normal ion and water transport in the kidney. Contributes to the regulation of the resting membrane potential of pancreatic beta cells. The low channel activity of homodimeric KCNK1 may be due to sumoylation. The low channel activity may be due to rapid internalization from the cell membrane and retention in recycling endosomes. Permeable to monovalent cations with ion selectivity for K(+) &gt; Rb(+) &gt;&gt; NH4(+) &gt;&gt; Cs(+) = Na(+) = Li(+). The chain is Potassium channel subfamily K member 1 from Cavia porcellus (Guinea pig).